The following is a 398-amino-acid chain: KiSS-1 receptor (398 aa).

Over 1 to 46 (MHTVATSGPNASWGAPANASGCPGCGANASDGPVPSPRAVDAWLVP) the chain is Extracellular. N-linked (GlcNAc...) asparagine glycans are attached at residues Asn10, Asn18, and Asn28. Residues 47 to 67 (LFFAALMLLGLVGNSLVIYVI) form a helical membrane-spanning segment. The Cytoplasmic segment spans residues 68–78 (CRHKPMRTVTN). Residues 79 to 101 (FYIANLAATDVTFLLCCVPFTAL) traverse the membrane as a helical segment. Residues 102 to 120 (LYPLPGWVLGDFMCKFVNY) are Extracellular-facing. Cys115 and Cys191 form a disulfide bridge. Residues 121–138 (IQQVSVQATCATLTAMSV) form a helical membrane-spanning segment. Topologically, residues 139–157 (DRWYVTVFPLRALHRRTPR) are cytoplasmic. Residues 158-178 (LALAVSLSIWVGSAAVSAPVL) form a helical membrane-spanning segment. Residues 179–202 (ALHRLSPGPRAYCSEAFPSRALER) are Extracellular-facing. The helical transmembrane segment at 203–223 (AFALYNLLALYLLPLLATCAC) threads the bilayer. Topologically, residues 224-263 (YAAMLRHLGRVAVRPAPADSALQGQVLAERAGAVRAKVSR) are cytoplasmic. A helical membrane pass occupies residues 264-284 (LVAAVVLLFAACWGPIQLFLV). Residues 285–305 (LQALGPAGSWHPRSYAAYALK) lie on the Extracellular side of the membrane. A helical transmembrane segment spans residues 306 to 328 (TWAHCMSYSNSALNPLLYAFLGS). Topologically, residues 329-398 (HFRQAFRRVC…CVLGEDNAPL (70 aa)) are cytoplasmic. The tract at residues 341 to 363 (APRRPRRPRRPGPSDPAAPHAEL) is disordered.

It belongs to the G-protein coupled receptor 1 family. Most highly expressed in the pancreas, placenta and spinal cord, with lower-level of expression in peripheral blood leukocytes, kidney, lung, fetal liver, stomach, small intestine, testes, spleen, thymus, adrenal glands and lymph nodes. In the adult brain, expressed in the superior frontal gyrus, putamen, caudate nucleus, cingulate gyrus, nucleus accumbens, hippocampus, pons and amygdala, as well as the hypothalamus and pituitary. Expression levels are higher in early (7-9 weeks) than term placentas. Expression levels were increased in both early placentas and molar pregnancies and were reduced in choriocarcinoma cells. Expressed at higher levels in first trimester trophoblasts than at term of gestation. Also found in the extravillous trophoblast suggesting endocrine/paracrine activation mechanism.

The protein localises to the cell membrane. Receptor for metastin (kisspeptin-54 or kp-54), a C-terminally amidated peptide of KiSS1. KiSS1 is a metastasis suppressor protein that suppresses metastases in malignant melanomas and in some breast carcinomas without affecting tumorigenicity. The metastasis suppressor properties may be mediated in part by cell cycle arrest and induction of apoptosis in malignant cells. The receptor is essential for normal gonadotropin-released hormone physiology and for puberty. The hypothalamic KiSS1/KISS1R system is a pivotal factor in central regulation of the gonadotropic axis at puberty and in adulthood. The receptor is also probably involved in the regulation and fine-tuning of trophoblast invasion generated by the trophoblast itself. Analysis of the transduction pathways activated by the receptor identifies coupling to phospholipase C and intracellular calcium release through pertussis toxin-insensitive G(q) proteins. The polypeptide is KiSS-1 receptor (KISS1R) (Homo sapiens (Human)).